The sequence spans 2137 residues: Pecanex-like protein 2 (2137 aa).

2 helical membrane passes run 34–54 (CHLY…LAFP) and 57–77 (AIIV…IKLV). Disordered regions lie at residues 92 to 163 (QQKP…LELS), 225 to 251 (NGKG…VDKG), 402 to 530 (EKTS…HARV), and 545 to 572 (SAEI…QMPN). Residues 96–114 (SRKEEKPNKDKEAKGEHIT) show a composition bias toward basic and acidic residues. The span at 116–125 (HRNPSNNRQI) shows a compositional bias: polar residues. N-linked (GlcNAc...) asparagine glycosylation is present at Asn-136. A compositionally biased stretch (polar residues) spans 146-156 (SRGQSITSHHS). Residue Asn-449 is glycosylated (N-linked (GlcNAc...) asparagine). The span at 479–490 (IKDHSSSSREPW) shows a compositional bias: basic and acidic residues. Polar residues predominate over residues 510–520 (GQTNLDPSSCK). N-linked (GlcNAc...) asparagine glycosylation is found at Asn-550, Asn-572, Asn-587, Asn-598, and Asn-613. Polar residues predominate over residues 593-602 (ASSQLNGSAE). A disordered region spans residues 593 to 612 (ASSQLNGSAEQNEESGLLRD). Disordered stretches follow at residues 621 to 655 (EILE…CTQP) and 740 to 763 (AREM…SGDP). Residues 630–655 (GHSSKQGKPDLQSQDHTSTGPACTQP) show a composition bias toward polar residues. Low complexity predominate over residues 746-760 (SSSSTTTSESQDPSS). The next 13 helical transmembrane spans lie at 844–864 (LAIL…SQGF), 868–888 (MWVL…LKSV), 901–921 (QIIT…ILLL), 952–972 (YLIV…FPQI), 983–1003 (IDML…VYSV), 1029–1049 (HIPA…YHLS), 1099–1119 (LIVC…TVFL), 1124–1144 (FLSI…HYVL), 1193–1213 (YILY…LISN), 1237–1257 (SFCN…FFHF), 1265–1285 (SFLL…DLLH), 1302–1322 (GSSF…MLFF), and 1324–1344 (TIAT…VIFI). Residues Asn-1412, Asn-1553, and Asn-1818 are each glycosylated (N-linked (GlcNAc...) asparagine). The segment at 1876–1958 (RQHSGGNIED…RPPMLSSSGP (83 aa)) is disordered. Composition is skewed to polar residues over residues 1901–1910 (SGGSQESSAE), 1920–1929 (GVSSCEGTQR), and 1937–1958 (SQSV…SSGP). N-linked (GlcNAc...) asparagine glycosylation is present at Asn-2054.

This sequence belongs to the pecanex family.

Its subcellular location is the membrane. In terms of biological role, may play a role in tumorigenesis of colorectal carcinomas with high microsatellite instability (MSI-H). The protein is Pecanex-like protein 2 of Homo sapiens (Human).